We begin with the raw amino-acid sequence, 415 residues long: uncharacterized protein (415 aa).

Disordered regions lie at residues 329–351 (KFNKPNNDDLQNESGDDSETESS) and 388–415 (KSMMNKSESNKKSNRKSNKRSNKNIITL). Over residues 338 to 348 (LQNESGDDSET) the composition is skewed to acidic residues. Positions 399–409 (KSNRKSNKRSN) are enriched in basic residues.

This is an uncharacterized protein from Acanthamoeba polyphaga mimivirus (APMV).